A 311-amino-acid chain; its full sequence is Ribonuclease HIII (311 aa).

One can recognise an RNase H type-2 domain in the interval 95-311 (MSIVGSDEVG…NTEKAFRLLK (217 aa)). Positions 101, 102, and 206 each coordinate a divalent metal cation.

This sequence belongs to the RNase HII family. RnhC subfamily. Mn(2+) serves as cofactor. The cofactor is Mg(2+).

It is found in the cytoplasm. The enzyme catalyses Endonucleolytic cleavage to 5'-phosphomonoester.. Functionally, endonuclease that specifically degrades the RNA of RNA-DNA hybrids. This chain is Ribonuclease HIII, found in Bacillus cereus (strain 03BB102).